Consider the following 328-residue polypeptide: MVKRLVVTAGEPAGIGPDLVLALSKEHWPHQLVVCADKKMLAQRAEQLGINVTLLDYDASTAPSPQQAGTLVVEHIDMPSTCVAGQLNEENGHYVLKTLERAALGCMKSEFDAIVTGPVHKGVINRAGVAFSGHTEFFAELSNTPLVVMMLATEGLRVALVTTHIPLAYVSKAVTAERLLKIIDILHRDLVEKFAIAEPKIYVCGLNPHAGEDGCLGREEIETITPTLEKIRQEKGIHLLGPLPADTIFNEKYLNDADAVLGMYHDQVLPVLKYKGFGQSVNITLGLPFIRTSVDHGTALDLAGTGQADTGSFRTALQHAIELVEKKQ.

2 residues coordinate substrate: His-134 and Thr-135. His-164, His-209, and His-265 together coordinate a divalent metal cation. Substrate contacts are provided by Lys-273, Asn-282, and Arg-291.

It belongs to the PdxA family. In terms of assembly, homodimer. The cofactor is Zn(2+). Mg(2+) is required as a cofactor. Co(2+) serves as cofactor.

It is found in the cytoplasm. It catalyses the reaction 4-(phosphooxy)-L-threonine + NAD(+) = 3-amino-2-oxopropyl phosphate + CO2 + NADH. Its pathway is cofactor biosynthesis; pyridoxine 5'-phosphate biosynthesis; pyridoxine 5'-phosphate from D-erythrose 4-phosphate: step 4/5. In terms of biological role, catalyzes the NAD(P)-dependent oxidation of 4-(phosphooxy)-L-threonine (HTP) into 2-amino-3-oxo-4-(phosphooxy)butyric acid which spontaneously decarboxylates to form 3-amino-2-oxopropyl phosphate (AHAP). The chain is 4-hydroxythreonine-4-phosphate dehydrogenase from Vibrio vulnificus (strain CMCP6).